Consider the following 248-residue polypeptide: Probable transcriptional regulatory protein RPE_4771 (248 aa).

The interval 1–21 (MAGHSQFKNIMHRKGRQDAQK) is disordered.

The protein belongs to the TACO1 family.

The protein localises to the cytoplasm. The polypeptide is Probable transcriptional regulatory protein RPE_4771 (Rhodopseudomonas palustris (strain BisA53)).